We begin with the raw amino-acid sequence, 347 residues long: Malate dehydrogenase, mitochondrial (347 aa).

A mitochondrion-targeting transit peptide spans Met1–Phe27. NAD(+)-binding positions include Gly41–Gly47 and Asp67. Arg114 and Arg120 together coordinate substrate. NAD(+)-binding positions include Asn127 and Ile150–Asn152. Residues Asn152 and Arg186 each coordinate substrate. Residue His210 is the Proton acceptor of the active site. Residue Met261 coordinates NAD(+).

Belongs to the LDH/MDH superfamily. MDH type 1 family. In terms of assembly, homodimer.

It is found in the mitochondrion matrix. It carries out the reaction (S)-malate + NAD(+) = oxaloacetate + NADH + H(+). The protein is Malate dehydrogenase, mitochondrial (MMDH) of Citrullus lanatus (Watermelon).